Here is a 290-residue protein sequence, read N- to C-terminus: Nitrogenase iron protein 1 (290 aa).

Residue 10–17 (GKGGIGKS) participates in ATP binding. Cysteine 98 is a binding site for [4Fe-4S] cluster. ADP-ribosylarginine; by dinitrogenase reductase ADP-ribosyltransferase is present on arginine 101. A [4Fe-4S] cluster-binding site is contributed by cysteine 133.

It belongs to the NifH/BchL/ChlL family. As to quaternary structure, homodimer. It depends on [4Fe-4S] cluster as a cofactor. In terms of processing, the reversible ADP-ribosylation of Arg-101 inactivates the nitrogenase reductase and regulates nitrogenase activity.

The enzyme catalyses N2 + 8 reduced [2Fe-2S]-[ferredoxin] + 16 ATP + 16 H2O = H2 + 8 oxidized [2Fe-2S]-[ferredoxin] + 2 NH4(+) + 16 ADP + 16 phosphate + 6 H(+). Nitrogenase holoenzyme is subject to 'conformational protection' by FeSII; under oxidizing conditions FeSII binds to the holoenzyme and reversibly protects it from oxidation. In terms of biological role, the key enzymatic reactions in nitrogen fixation are catalyzed by the nitrogenase complex, which has 2 components: the iron protein (component 2) and a component 1 which is either a molybdenum-iron protein, a vanadium-iron, or an iron-iron protein. This Azotobacter vinelandii protein is Nitrogenase iron protein 1 (nifH1).